The following is a 127-amino-acid chain: Multiple antibiotic resistance protein MarA (127 aa).

The HTH araC/xylS-type domain maps to 12 to 110 (HSILDWIEDN…DVPPHKYRMT (99 aa)). 2 DNA-binding regions (H-T-H motif) span residues 29-50 (EKVS…KKET) and 77-100 (ILYL…KNYF).

Monomer.

In terms of biological role, may be a transcriptional activator of genes involved in the multiple antibiotic resistance (Mar) phenotype. It can also activate genes such as sodA, zwf and micF. This Escherichia coli (strain K12) protein is Multiple antibiotic resistance protein MarA (marA).